The sequence spans 386 residues: MFFRLDLESCMKFEKLGQSGRARRGRLTLAHGVVETPVFMPVGTYGTVKGMLPRDIEEIQAQIILGNTFHLYLRPGLEVIKEHGGLHEFIKWDKPILTDSGGFQVFSLGAMRKIKEEGVTFRSPIDGSKVFLSPEISMEIQQVLNSDIVMIFDECTPYPATHEEAQKSLQLSLRWAKRCKTHHHEQLNNTNALFGIIQGGMYEDLRDESLNGLLEIGFDGYAIGGLSVGEPKEEMIKVLDYLPAKMPEDKPRYLMGVGKPEDIVEAVRRGVDMFDCVMPTRNARNGHYFVTDGLVRIRNSKYRHDQSPLDPHCDCYTCKNFTRAYLYHLEKCGEMLASMLGTIHNLRYYQRLTQGIRDALEQGTFDEFVTDFYTRRGLDVPPAPVD.

D99 functions as the Proton acceptor in the catalytic mechanism. Residues 99–103 (DSGGF), D153, Q198, and G225 each bind substrate. The interval 256–262 (GVGKPED) is RNA binding. Catalysis depends on D275, which acts as the Nucleophile. An RNA binding; important for wobble base 34 recognition region spans residues 280–284 (TRNAR). Positions 313, 315, 318, and 344 each coordinate Zn(2+).

This sequence belongs to the queuine tRNA-ribosyltransferase family. As to quaternary structure, homodimer. Within each dimer, one monomer is responsible for RNA recognition and catalysis, while the other monomer binds to the replacement base PreQ1. Zn(2+) is required as a cofactor.

It catalyses the reaction 7-aminomethyl-7-carbaguanine + guanosine(34) in tRNA = 7-aminomethyl-7-carbaguanosine(34) in tRNA + guanine. Its pathway is tRNA modification; tRNA-queuosine biosynthesis. Its function is as follows. Catalyzes the base-exchange of a guanine (G) residue with the queuine precursor 7-aminomethyl-7-deazaguanine (PreQ1) at position 34 (anticodon wobble position) in tRNAs with GU(N) anticodons (tRNA-Asp, -Asn, -His and -Tyr). Catalysis occurs through a double-displacement mechanism. The nucleophile active site attacks the C1' of nucleotide 34 to detach the guanine base from the RNA, forming a covalent enzyme-RNA intermediate. The proton acceptor active site deprotonates the incoming PreQ1, allowing a nucleophilic attack on the C1' of the ribose to form the product. After dissociation, two additional enzymatic reactions on the tRNA convert PreQ1 to queuine (Q), resulting in the hypermodified nucleoside queuosine (7-(((4,5-cis-dihydroxy-2-cyclopenten-1-yl)amino)methyl)-7-deazaguanosine). The chain is Queuine tRNA-ribosyltransferase from Acinetobacter baylyi (strain ATCC 33305 / BD413 / ADP1).